A 233-amino-acid polypeptide reads, in one-letter code: Ribonuclease 3 (233 aa).

The RNase III domain maps to 6 to 135 (QDYLAKEFNI…FIGALYLDQG (130 aa)). Glu-48 is a Mg(2+) binding site. The active site involves Asp-52. The Mg(2+) site is built by Asp-121 and Glu-124. Glu-124 is an active-site residue. The 70-residue stretch at 161 to 230 (DAKTSLQEFL…AQQALDNMRN (70 aa)) folds into the DRBM domain. Residues 205 to 233 (IGEGKGSSKKHAEMQAAQQALDNMRNKNK) are disordered.

The protein belongs to the ribonuclease III family. Homodimer. The cofactor is Mg(2+).

The protein resides in the cytoplasm. The catalysed reaction is Endonucleolytic cleavage to 5'-phosphomonoester.. Functionally, digests double-stranded RNA. Involved in the processing of primary rRNA transcript to yield the immediate precursors to the large and small rRNAs (23S and 16S). Processes some mRNAs, and tRNAs when they are encoded in the rRNA operon. Processes pre-crRNA and tracrRNA of type II CRISPR loci if present in the organism. The chain is Ribonuclease 3 from Limosilactobacillus reuteri (strain DSM 20016) (Lactobacillus reuteri).